The following is a 215-amino-acid chain: CASP-like protein 1E1 (215 aa).

The Cytoplasmic portion of the chain corresponds to 1–51 (MESSRGKPGLNGSGGGAAAFDYSSRRGYYTGAGAALPPLAAGSRAPPVDPC). A helical transmembrane segment spans residues 52–72 (CVVLRVFVLLGTLASAVVMAA). The Extracellular segment spans residues 73 to 103 (DRQSTTVQIAAGEELAPPLRVPVTAKWTYSS). A helical membrane pass occupies residues 104 to 124 (AFVYFVVANAMVFAFSAAALA). Topologically, residues 125–130 (AVRRRS) are cytoplasmic. Residues 131–151 (AVVPVMVGDLVAMALLFSAVG) form a helical membrane-spanning segment. The Extracellular segment spans residues 152-185 (AAAQFGLLGERGNAHVRWAKVCDVYGPFCERAMA). A helical transmembrane segment spans residues 186 to 206 (AVVVALIAAFADLVLLMLTIL). Topologically, residues 207 to 215 (TIHKASSYY) are cytoplasmic.

Belongs to the Casparian strip membrane proteins (CASP) family. In terms of assembly, homodimer and heterodimers.

It localises to the cell membrane. The sequence is that of CASP-like protein 1E1 from Oryza sativa subsp. japonica (Rice).